A 396-amino-acid polypeptide reads, in one-letter code: NADH-quinone oxidoreductase subunit D (396 aa).

It belongs to the complex I 49 kDa subunit family. As to quaternary structure, NDH-1 is composed of 14 different subunits. Subunits NuoB, C, D, E, F, and G constitute the peripheral sector of the complex.

Its subcellular location is the cell inner membrane. It carries out the reaction a quinone + NADH + 5 H(+)(in) = a quinol + NAD(+) + 4 H(+)(out). NDH-1 shuttles electrons from NADH, via FMN and iron-sulfur (Fe-S) centers, to quinones in the respiratory chain. The immediate electron acceptor for the enzyme in this species is believed to be ubiquinone. Couples the redox reaction to proton translocation (for every two electrons transferred, four hydrogen ions are translocated across the cytoplasmic membrane), and thus conserves the redox energy in a proton gradient. In Rhizobium johnstonii (strain DSM 114642 / LMG 32736 / 3841) (Rhizobium leguminosarum bv. viciae), this protein is NADH-quinone oxidoreductase subunit D.